The sequence spans 833 residues: Leucine--tRNA ligase (833 aa).

The 'HIGH' region motif lies at 41–52; it reads PYPSGAGLHVGH. The 'KMSKS' region signature appears at 610–614; that stretch reads KMSKS. K613 lines the ATP pocket.

This sequence belongs to the class-I aminoacyl-tRNA synthetase family.

Its subcellular location is the cytoplasm. It catalyses the reaction tRNA(Leu) + L-leucine + ATP = L-leucyl-tRNA(Leu) + AMP + diphosphate. The protein is Leucine--tRNA ligase of Streptococcus equi subsp. zooepidemicus (strain H70).